A 686-amino-acid polypeptide reads, in one-letter code: Amphiphysin (686 aa).

Coiled-coil stretches lie at residues 10–83 and 144–191; these read AKNV…SLHE and DYDS…QEEL. Positions 24-240 constitute a BAR domain; the sequence is VLQKLGKADE…MTKLGDQHAD (217 aa). Disordered regions lie at residues 244 to 314, 421 to 441, and 483 to 597; these read SIQG…PTKE, AETE…ATAA, and VEEA…AGAV. At Ser252 the chain carries Phosphoserine. The residue at position 260 (Thr260) is a Phosphothreonine. A compositionally biased stretch (pro residues) spans 261-274; that stretch reads PSPPEEPSPLPSPT. A phosphoserine mark is found at Ser262, Ser268, Ser272, and Ser276. Phosphothreonine is present on Thr280. The span at 424-441 shows a compositional bias: low complexity; it reads EQALPTEPQAEEPPATAA. Ser500 carries the phosphoserine modification. Residues 541–562 show a composition bias toward basic and acidic residues; the sequence is SNHEGEGEHQETATGTEPREAA. One can recognise an SH3 domain in the interval 613-686; that stretch reads GFLYKVETLH…FPENFTRRLE (74 aa). At Ser629 the chain carries Phosphoserine.

As to quaternary structure, heterodimer with BIN1. Binds SH3GLB1. Interacts with REPS1 and SGIP1. Binds AP2A2. Interacts with AP2B1. Interacts with DNM1 and SYNJ1.

Its subcellular location is the cytoplasmic vesicle. It is found in the secretory vesicle. It localises to the synaptic vesicle membrane. The protein localises to the cytoplasm. The protein resides in the cytoskeleton. May participate in mechanisms of regulated exocytosis in synapses and certain endocrine cell types. May control the properties of the membrane associated cytoskeleton. The polypeptide is Amphiphysin (Amph) (Mus musculus (Mouse)).